Reading from the N-terminus, the 673-residue chain is Metal-nicotianamine transporter YSL1 (673 aa).

Basic and acidic residues predominate over residues 1-13; sequence MEIEQRRIMKREG. A disordered region spans residues 1 to 39; that stretch reads MEIEQRRIMKREGEEEEDNNQLSLQEEEPDTEEEMSGRT. The segment covering 14–34 has biased composition (acidic residues); that stretch reads EEEEDNNQLSLQEEEPDTEEE. 16 consecutive transmembrane segments (helical) span residues 46–66, 71–91, 119–139, 163–183, 225–245, 260–280, 283–303, 328–348, 392–412, 420–440, 442–462, 467–487, 510–530, 558–578, 604–624, and 642–662; these read QITVRGVFVSIVIGVVFSVIA, LTTGIVPNLNSSAALLAFVFV, SAVACYGIAVGGGFASYLLGL, GLGWMTAYLFVVCFIGLFVLI, FMKYFSFSFLWGFFQWFFSGI, AWKQTFFFDFSMTFVGAGMIC, LVNLSLLLGAILSYGLMWPLL, VFLSVALILGDGLYTFVKILF, FAVSGYLTFAAVSTVVVPLIF, VIVAYIFAPSLAFCNAYGAGL, DINMAYNYGKIGLFVIAAVTG, VVAGLAGCGLIKSVVSVSCIL, IGTVVGCIVTPLSFFLFYKAF, FSALPLHCLQMCYGFFGFAVL, FLVGAYFAIDMCVGTLIVFVW, and GLICGEGLWTLPAAVLALAGV.

Belongs to the YSL (TC 2.A.67.2) family. In terms of tissue distribution, low levels of expression in leaves and shoots, but not detected in roots. Restricted to the vasculature, in the xylem parenchyma surrounding xylem tubes. Expressed in pollen grains, in the vasculature of petals and sepals, in the carpel veins, in the style underneath the stigmatic papillae, in the vascular tissue of the funiculus and in the chalazal endosperm.

The protein resides in the membrane. Involved in iron loading of the seeds. Acts probably as a transporter of iron- and metal-nicotianamine chelates. The sequence is that of Metal-nicotianamine transporter YSL1 (YSL1) from Arabidopsis thaliana (Mouse-ear cress).